A 645-amino-acid polypeptide reads, in one-letter code: TBC1 domain family member 17 (645 aa).

The segment at 57-85 is disordered; the sequence is PTQILFKKDPSRGEPSTSEEEPTFDPGYE. The required for interaction with OPTN stretch occupies residues 217-309; that stretch reads DPYSTTFSSF…PELKNRIFSG (93 aa). The Rab-GAP TBC domain maps to 310 to 520; the sequence is GLSPGLRREA…RLWEVLWTGL (211 aa). The interval 596 to 645 is disordered; it reads QPEEPSSPSPPVSPMPLSPTRAPLPPPLPEEVIPQPDSSLEILPEDEDGA. The segment covering 600–624 has biased composition (pro residues); the sequence is PSSPSPPVSPMPLSPTRAPLPPPLP. Residues S602, S604, and S608 each carry the phosphoserine modification. T615 is modified (phosphothreonine).

In terms of assembly, interacts with OPTN; this interaction mediates TBC1D17 transient association with Rab8.

The protein localises to the cytoplasmic vesicle. It localises to the autophagosome. It is found in the cytoplasm. Its subcellular location is the recycling endosome. Functionally, probable GTPase-activating protein that inhibits RAB8A/B function. Reduces Rab8 recruitment to tubules emanating from the endocytic recycling compartment (ERC) and inhibits Rab8-mediated endocytic trafficking, such as that of transferrin receptor (TfR). Involved in regulation of autophagy. In Mus musculus (Mouse), this protein is TBC1 domain family member 17 (Tbc1d17).